Reading from the N-terminus, the 557-residue chain is Urocanate hydratase (557 aa).

NAD(+)-binding positions include 53–54, glutamine 131, 177–179, glutamate 197, arginine 202, 243–244, 264–268, 274–275, and tyrosine 323; these read GG, GMG, NA, QTSAH, and YL. Cysteine 411 is a catalytic residue. Glycine 493 is an NAD(+) binding site.

The protein belongs to the urocanase family. NAD(+) serves as cofactor.

It localises to the cytoplasm. It carries out the reaction 4-imidazolone-5-propanoate = trans-urocanate + H2O. The protein operates within amino-acid degradation; L-histidine degradation into L-glutamate; N-formimidoyl-L-glutamate from L-histidine: step 2/3. Catalyzes the conversion of urocanate to 4-imidazolone-5-propionate. This Pseudomonas putida (strain GB-1) protein is Urocanate hydratase.